Reading from the N-terminus, the 138-residue chain is Putative nickel-responsive regulator (138 aa).

Positions 80, 91, 93, and 99 each coordinate Ni(2+).

Belongs to the transcriptional regulatory CopG/NikR family. It depends on Ni(2+) as a cofactor.

In terms of biological role, transcriptional regulator. In Campylobacter hominis (strain ATCC BAA-381 / DSM 21671 / CCUG 45161 / LMG 19568 / NCTC 13146 / CH001A), this protein is Putative nickel-responsive regulator.